The primary structure comprises 673 residues: Bifunctional polymyxin resistance protein ArnA (673 aa).

The segment at 1–311 (MKAIVFAYHD…EMGMVPQARL (311 aa)) is formyltransferase ArnAFT. The active-site Proton donor; for formyltransferase activity is the H104. Residues R114 and 136-140 (VSRAD) each bind (6R)-10-formyltetrahydrofolate. The tract at residues 321–673 (RRTRVLILGV…HTADATDTQG (353 aa)) is dehydrogenase ArnADH. NAD(+) contacts are provided by residues D354 and 375–376 (DI). UDP-alpha-D-glucuronate contacts are provided by residues A400, Y405, and 439-440 (TS). Residue E441 is the Proton acceptor; for decarboxylase activity of the active site. UDP-alpha-D-glucuronate is bound by residues R467, N499, 533 to 542 (KLVDGGAQKR), and Y620. The active-site Proton donor; for decarboxylase activity is R626.

In the N-terminal section; belongs to the Fmt family. UDP-L-Ara4N formyltransferase subfamily. The protein in the C-terminal section; belongs to the NAD(P)-dependent epimerase/dehydratase family. UDP-glucuronic acid decarboxylase subfamily. As to quaternary structure, homohexamer, formed by a dimer of trimers.

The catalysed reaction is UDP-alpha-D-glucuronate + NAD(+) = UDP-beta-L-threo-pentopyranos-4-ulose + CO2 + NADH. It catalyses the reaction UDP-4-amino-4-deoxy-beta-L-arabinose + (6R)-10-formyltetrahydrofolate = UDP-4-deoxy-4-formamido-beta-L-arabinose + (6S)-5,6,7,8-tetrahydrofolate + H(+). It functions in the pathway nucleotide-sugar biosynthesis; UDP-4-deoxy-4-formamido-beta-L-arabinose biosynthesis; UDP-4-deoxy-4-formamido-beta-L-arabinose from UDP-alpha-D-glucuronate: step 1/3. It participates in nucleotide-sugar biosynthesis; UDP-4-deoxy-4-formamido-beta-L-arabinose biosynthesis; UDP-4-deoxy-4-formamido-beta-L-arabinose from UDP-alpha-D-glucuronate: step 3/3. Its pathway is bacterial outer membrane biogenesis; lipopolysaccharide biosynthesis. Its function is as follows. Bifunctional enzyme that catalyzes the oxidative decarboxylation of UDP-glucuronic acid (UDP-GlcUA) to UDP-4-keto-arabinose (UDP-Ara4O) and the addition of a formyl group to UDP-4-amino-4-deoxy-L-arabinose (UDP-L-Ara4N) to form UDP-L-4-formamido-arabinose (UDP-L-Ara4FN). The modified arabinose is attached to lipid A and is required for resistance to polymyxin and cationic antimicrobial peptides. The protein is Bifunctional polymyxin resistance protein ArnA of Pectobacterium atrosepticum (strain SCRI 1043 / ATCC BAA-672) (Erwinia carotovora subsp. atroseptica).